The following is a 118-amino-acid chain: Small ribosomal subunit protein uS13 (118 aa).

Residues 99 to 118 (GQRTRTNARTRKGPRKAIKK) are disordered.

It belongs to the universal ribosomal protein uS13 family. As to quaternary structure, part of the 30S ribosomal subunit. Forms a loose heterodimer with protein S19. Forms two bridges to the 50S subunit in the 70S ribosome.

Functionally, located at the top of the head of the 30S subunit, it contacts several helices of the 16S rRNA. In the 70S ribosome it contacts the 23S rRNA (bridge B1a) and protein L5 of the 50S subunit (bridge B1b), connecting the 2 subunits; these bridges are implicated in subunit movement. Contacts the tRNAs in the A and P-sites. The polypeptide is Small ribosomal subunit protein uS13 (Xylella fastidiosa (strain M12)).